Reading from the N-terminus, the 152-residue chain is Lipoprotein signal peptidase (152 aa).

3 helical membrane-spanning segments follow: residues 5–25, 61–81, and 84–104; these read LFVLSLILLVALDQLSKFWIV, WFFVVITVLVIGYAIYYLATH, and LNIWKQLALLLIISGGIGNFI. Residues Asp114 and Asp130 contribute to the active site. The helical transmembrane segment at 125-145 threads the bilayer; the sequence is IFNVADSYLTVGVILLVICLW.

The protein belongs to the peptidase A8 family.

The protein localises to the cell membrane. The enzyme catalyses Release of signal peptides from bacterial membrane prolipoproteins. Hydrolyzes -Xaa-Yaa-Zaa-|-(S,diacylglyceryl)Cys-, in which Xaa is hydrophobic (preferably Leu), and Yaa (Ala or Ser) and Zaa (Gly or Ala) have small, neutral side chains.. Its pathway is protein modification; lipoprotein biosynthesis (signal peptide cleavage). Its function is as follows. This protein specifically catalyzes the removal of signal peptides from prolipoproteins. The polypeptide is Lipoprotein signal peptidase (Streptococcus pyogenes serotype M2 (strain MGAS10270)).